The sequence spans 370 residues: Cyclic AMP-responsive element-binding protein 3-like protein 4 (370 aa).

Residues 1–55 are required for transcriptional activation; sequence MELGCPELLEPPEDIFSTGSFLELGFNGPASKVPVTRGLQKSEPDDFLNLFIDPN. Over 1–271 the chain is Cytoplasmic; it reads MELGCPELLE…QTSSRAAQTS (271 aa). The interval 61–85 is disordered; sequence ETSPGRDSGVSEDPGSPAQQASSSP. Residues 76-85 are compositionally biased toward low complexity; it reads SPAQQASSSP. In terms of domain architecture, bZIP spans 193–256; sequence ILKKIRRKIR…IFLMEQVRQL (64 aa). The tract at residues 195–234 is basic motif; sequence KKIRRKIRNKQSAQDSRRRKKEYLDGLESRVAACSEQNQK. The segment at 235 to 256 is leucine-zipper; that stretch reads LQRKVQELERQNIFLMEQVRQL. The helical; Signal-anchor for type II membrane protein transmembrane segment at 272-292 threads the bilayer; sequence TCVLILLFSLALIILPSFSPF. At 293 to 370 the chain is on the lumenal side; it reads QGQSEARPED…IRGMVHTDEM (78 aa). 2 N-linked (GlcNAc...) asparagine glycosylation sites follow: asparagine 318 and asparagine 342.

This sequence belongs to the bZIP family. ATF subfamily. As to quaternary structure, binds DNA as a dimer. Forms a heterodimer with CREM isoform Tau. Controlled by regulated intramembrane proteolysis (RIP). Following ER stress a fragment containing the cytoplasmic transcription factor domain is released by proteolysis. The cleavage seems to be performed sequentially by site-1 and site-2 proteases (PS1 and PS2). PS1 cleavage may be suppressed by a determinant in the C-terminal region. As to expression, predominantly expressed at high levels in testis with isoform 2 being the predominant isoform. Specifically expressed in postmeiotic spermatids and accumulates in the mid/late stage (at protein level). Ubiquitously expressed at low levels.

It localises to the endoplasmic reticulum membrane. Its subcellular location is the cytoplasmic vesicle. The protein resides in the secretory vesicle. It is found in the acrosome inner membrane. The protein localises to the nucleus. Functionally, transcriptional activator that may play a role in the unfolded protein response of the testis. Proposed to be involved in spermiogenesis. May be involved in regulating the maturation of sperm head nuclei. Alternatively proposed to be a paternally delivered transcription factor that may function in early zygotic gene activation. Increases the binding of CREM isoform Tau with CRE. The CREM isoform Tau-CREB3L4 heterodimer functions through CRE but not through UPRE and may recruit HIRA to CRE to regulate histone exchange. The protein is Cyclic AMP-responsive element-binding protein 3-like protein 4 (Creb3l4) of Mus musculus (Mouse).